Consider the following 319-residue polypeptide: Carboxylesterase NlhH (319 aa).

The Involved in the stabilization of the negatively charged intermediate by the formation of the oxyanion hole motif lies at 88-90; sequence HGG. Residues Ser-162, Asp-260, and His-290 contribute to the active site.

It belongs to the 'GDXG' lipolytic enzyme family. As to quaternary structure, monomer.

It catalyses the reaction a carboxylic ester + H2O = an alcohol + a carboxylate + H(+). Hydrolyzes various short-chain esters. The protein is Carboxylesterase NlhH (nlhH) of Mycobacterium tuberculosis (strain CDC 1551 / Oshkosh).